Reading from the N-terminus, the 202-residue chain is Large ribosomal subunit protein bL25 (202 aa).

This sequence belongs to the bacterial ribosomal protein bL25 family. CTC subfamily. Part of the 50S ribosomal subunit; part of the 5S rRNA/L5/L18/L25 subcomplex. Contacts the 5S rRNA. Binds to the 5S rRNA independently of L5 and L18.

In terms of biological role, this is one of the proteins that binds to the 5S RNA in the ribosome where it forms part of the central protuberance. The sequence is that of Large ribosomal subunit protein bL25 from Corynebacterium efficiens (strain DSM 44549 / YS-314 / AJ 12310 / JCM 11189 / NBRC 100395).